Here is a 131-residue protein sequence, read N- to C-terminus: DNA-directed RNA polymerase subunit Rpo8 (131 aa).

The protein belongs to the archaeal Rpo8 RNA polymerase subunit family. Part of the 13-subunit RNA polymerase complex. Interacts with Rpo1N on the periphery of the clamp head.

Its subcellular location is the cytoplasm. The enzyme catalyses RNA(n) + a ribonucleoside 5'-triphosphate = RNA(n+1) + diphosphate. In terms of biological role, DNA-dependent RNA polymerase (RNAP) catalyzes the transcription of DNA into RNA using the four ribonucleoside triphosphates as substrates. The sequence is that of DNA-directed RNA polymerase subunit Rpo8 from Saccharolobus shibatae (strain ATCC 51178 / DSM 5389 / JCM 8931 / NBRC 15437 / B12) (Sulfolobus shibatae).